Reading from the N-terminus, the 158-residue chain is Endoribonuclease YbeY (158 aa).

Zn(2+) contacts are provided by His-119, His-123, and His-129.

It belongs to the endoribonuclease YbeY family. It depends on Zn(2+) as a cofactor.

It is found in the cytoplasm. In terms of biological role, single strand-specific metallo-endoribonuclease involved in late-stage 70S ribosome quality control and in maturation of the 3' terminus of the 16S rRNA. This Shewanella sediminis (strain HAW-EB3) protein is Endoribonuclease YbeY.